The sequence spans 126 residues: MALKIRLARGGSKKRPYYQIVVADARSPRDGRFLEKVGSWNPMLAKDNPLRVELKADLIKEWIAKGAQPTDRVLRFLAEAGLAERAARSNPEKALPGKRALERVAEKKQKAEDAAAAAAAEASAAE.

Residues 87 to 126 (ARSNPEKALPGKRALERVAEKKQKAEDAAAAAAAEASAAE) form a disordered region. Positions 99 to 113 (RALERVAEKKQKAED) are enriched in basic and acidic residues. Over residues 114–126 (AAAAAAAEASAAE) the composition is skewed to low complexity.

This sequence belongs to the bacterial ribosomal protein bS16 family.

The sequence is that of Small ribosomal subunit protein bS16 from Agrobacterium fabrum (strain C58 / ATCC 33970) (Agrobacterium tumefaciens (strain C58)).